Reading from the N-terminus, the 358-residue chain is tRNA N6-adenosine threonylcarbamoyltransferase (358 aa).

The Fe cation site is built by histidine 122 and histidine 126. Residues 145–149, aspartate 178, glycine 191, and asparagine 287 contribute to the substrate site; that span reads LVSGG. Fe cation is bound at residue aspartate 315.

It belongs to the KAE1 / TsaD family. Fe(2+) serves as cofactor.

It localises to the cytoplasm. It catalyses the reaction L-threonylcarbamoyladenylate + adenosine(37) in tRNA = N(6)-L-threonylcarbamoyladenosine(37) in tRNA + AMP + H(+). In terms of biological role, required for the formation of a threonylcarbamoyl group on adenosine at position 37 (t(6)A37) in tRNAs that read codons beginning with adenine. Is involved in the transfer of the threonylcarbamoyl moiety of threonylcarbamoyl-AMP (TC-AMP) to the N6 group of A37, together with TsaE and TsaB. TsaD likely plays a direct catalytic role in this reaction. This is tRNA N6-adenosine threonylcarbamoyltransferase from Hydrogenovibrio crunogenus (strain DSM 25203 / XCL-2) (Thiomicrospira crunogena).